A 288-amino-acid chain; its full sequence is 2-dehydro-3-deoxyphosphooctonate aldolase (288 aa).

It belongs to the KdsA family.

The protein resides in the cytoplasm. The catalysed reaction is D-arabinose 5-phosphate + phosphoenolpyruvate + H2O = 3-deoxy-alpha-D-manno-2-octulosonate-8-phosphate + phosphate. Its pathway is carbohydrate biosynthesis; 3-deoxy-D-manno-octulosonate biosynthesis; 3-deoxy-D-manno-octulosonate from D-ribulose 5-phosphate: step 2/3. It participates in bacterial outer membrane biogenesis; lipopolysaccharide biosynthesis. The sequence is that of 2-dehydro-3-deoxyphosphooctonate aldolase from Syntrophobacter fumaroxidans (strain DSM 10017 / MPOB).